The chain runs to 208 residues: U11/U12 small nuclear ribonucleoprotein 35 kDa protein (208 aa).

The RRM domain occupies 50 to 128 (LTLFVARLNP…YELLVDVEQE (79 aa)). The disordered stretch occupies residues 133-208 (GWRPRRLGGG…TEDRTHRHTY (76 aa)). Positions 171–208 (RPAEPRGRETERERDRRDYRDRRHERTHTEDRTHRHTY) are enriched in basic and acidic residues.

Its subcellular location is the nucleus. This Danio rerio (Zebrafish) protein is U11/U12 small nuclear ribonucleoprotein 35 kDa protein (snrnp35).